Here is a 155-residue protein sequence, read N- to C-terminus: Deoxyuridine 5'-triphosphate nucleotidohydrolase (155 aa).

Substrate contacts are provided by residues 74-76 (RSG), asparagine 87, and 91-93 (TID).

It belongs to the dUTPase family. Mg(2+) is required as a cofactor.

The catalysed reaction is dUTP + H2O = dUMP + diphosphate + H(+). The protein operates within pyrimidine metabolism; dUMP biosynthesis; dUMP from dCTP (dUTP route): step 2/2. Its function is as follows. This enzyme is involved in nucleotide metabolism: it produces dUMP, the immediate precursor of thymidine nucleotides and it decreases the intracellular concentration of dUTP so that uracil cannot be incorporated into DNA. This Cereibacter sphaeroides (strain KD131 / KCTC 12085) (Rhodobacter sphaeroides) protein is Deoxyuridine 5'-triphosphate nucleotidohydrolase.